The primary structure comprises 512 residues: Oryzalexin E synthase (512 aa).

Residues 6-26 (SELWMTAVATCMSLLLYLTIL) form a helical membrane-spanning segment. Cys-452 serves as a coordination point for heme.

This sequence belongs to the cytochrome P450 family. It depends on heme as a cofactor.

The protein resides in the membrane. The catalysed reaction is ent-sandaracopimaradien-3beta-ol + reduced [NADPH--hemoprotein reductase] + O2 = oryzalexin E + oxidized [NADPH--hemoprotein reductase] + H2O + H(+). Enzyme of the diterpenoid metabolism involved in the biosynthesis of the oryzalexin class of phytoalexins. Can use ent-sandaracopimaradien and syn-stemodene as substrates, but no activity with syn-stemoden-19-oic acid. Hydroxylates 3-alpha-hydroxy-ent-sandaracopimaradiene at C-9-beta, resulting in a 3-alpha,9-beta-diol corresponding to oryzalexins E. The chain is Oryzalexin E synthase from Oryza sativa subsp. japonica (Rice).